The chain runs to 513 residues: Trigger factor (513 aa).

The region spanning 164 to 249 (GDQIIIDFLG…VKAVKNAGEF (86 aa)) is the PPIase FKBP-type domain. The tract at residues 436 to 513 (QAAIEAEEGA…KAPAKKKAEG (78 aa)) is disordered. Residues 452-461 (AKKAPAKKKA) show a composition bias toward basic residues. Positions 489–498 (ADEAPAAEEA) are enriched in low complexity. Residues 501 to 513 (AKKKAPAKKKAEG) show a composition bias toward basic residues.

It belongs to the FKBP-type PPIase family. Tig subfamily.

The protein localises to the cytoplasm. The enzyme catalyses [protein]-peptidylproline (omega=180) = [protein]-peptidylproline (omega=0). Its function is as follows. Involved in protein export. Acts as a chaperone by maintaining the newly synthesized protein in an open conformation. Functions as a peptidyl-prolyl cis-trans isomerase. The protein is Trigger factor of Novosphingobium aromaticivorans (strain ATCC 700278 / DSM 12444 / CCUG 56034 / CIP 105152 / NBRC 16084 / F199).